Here is a 326-residue protein sequence, read N- to C-terminus: Vitamin B12 import system permease protein BtuC (326 aa).

9 helical membrane-spanning segments follow: residues 15-35 (WLLS…CAGE), 61-81 (LAVL…QALF), 88-108 (PGLL…VLLG), 112-132 (LPGW…TLIL), 146-166 (LLAG…AIYF), 184-204 (GGVD…LIWI), 240-260 (GWMV…GLVI), 274-294 (VLLP…DVVA), and 302-322 (ELPI…WLLL).

It belongs to the binding-protein-dependent transport system permease family. FecCD subfamily. As to quaternary structure, the complex is composed of two ATP-binding proteins (BtuD), two transmembrane proteins (BtuC) and a solute-binding protein (BtuF).

It is found in the cell inner membrane. Functionally, part of the ABC transporter complex BtuCDF involved in vitamin B12 import. Involved in the translocation of the substrate across the membrane. The chain is Vitamin B12 import system permease protein BtuC from Salmonella choleraesuis (strain SC-B67).